The following is a 39-amino-acid chain: Cytochrome b559 subunit beta (39 aa).

Residues 14-30 (WLAVHGLAIPTVSFLGS) form a helical membrane-spanning segment. Residue histidine 18 coordinates heme.

This sequence belongs to the PsbE/PsbF family. Heterodimer of an alpha subunit and a beta subunit. PSII is composed of 1 copy each of membrane proteins PsbA, PsbB, PsbC, PsbD, PsbE, PsbF, PsbH, PsbI, PsbJ, PsbK, PsbL, PsbM, PsbT, PsbX, PsbY, PsbZ, Psb30/Ycf12, at least 3 peripheral proteins of the oxygen-evolving complex and a large number of cofactors. It forms dimeric complexes. The cofactor is heme b.

It localises to the plastid. It is found in the chloroplast thylakoid membrane. Its function is as follows. This b-type cytochrome is tightly associated with the reaction center of photosystem II (PSII). PSII is a light-driven water:plastoquinone oxidoreductase that uses light energy to abstract electrons from H(2)O, generating O(2) and a proton gradient subsequently used for ATP formation. It consists of a core antenna complex that captures photons, and an electron transfer chain that converts photonic excitation into a charge separation. In Beta vulgaris (Sugar beet), this protein is Cytochrome b559 subunit beta.